Here is a 732-residue protein sequence, read N- to C-terminus: Catalase-peroxidase (732 aa).

A cross-link (tryptophyl-tyrosyl-methioninium (Trp-Tyr) (with M-246)) is located at residues 97-220 (WHSAGTYRTS…LAAVQMGLIY (124 aa)). Residue histidine 98 is the Proton acceptor of the active site. Positions 220–246 (YVNPEGPDGNPDPVAAGRDIRETFARM) form a cross-link, tryptophyl-tyrosyl-methioninium (Tyr-Met) (with W-97). Position 261 (histidine 261) interacts with heme b.

It belongs to the peroxidase family. Peroxidase/catalase subfamily. In terms of assembly, homodimer or homotetramer. Requires heme b as cofactor. In terms of processing, formation of the three residue Trp-Tyr-Met cross-link is important for the catalase, but not the peroxidase activity of the enzyme.

It carries out the reaction H2O2 + AH2 = A + 2 H2O. The enzyme catalyses 2 H2O2 = O2 + 2 H2O. Functionally, bifunctional enzyme with both catalase and broad-spectrum peroxidase activity. The polypeptide is Catalase-peroxidase (Chlorobium phaeobacteroides (strain DSM 266 / SMG 266 / 2430)).